Here is a 337-residue protein sequence, read N- to C-terminus: Ribose-phosphate pyrophosphokinase 4 (337 aa).

The residue at position 2 (serine 2) is an N-acetylserine. Mg(2+) is bound by residues aspartate 158 and histidine 160. The interval 241–256 is binding of phosphoribosylpyrophosphate; sequence GCHVVIVDDLVQSGGT.

Belongs to the ribose-phosphate pyrophosphokinase family.

It catalyses the reaction D-ribose 5-phosphate + ATP = 5-phospho-alpha-D-ribose 1-diphosphate + AMP + H(+). This Arabidopsis thaliana (Mouse-ear cress) protein is Ribose-phosphate pyrophosphokinase 4 (PRS4).